The primary structure comprises 507 residues: Maturase K (507 aa).

Belongs to the intron maturase 2 family. MatK subfamily.

It localises to the plastid. The protein localises to the chloroplast. In terms of biological role, usually encoded in the trnK tRNA gene intron. Probably assists in splicing its own and other chloroplast group II introns. The polypeptide is Maturase K (Araucaria heterophylla (Norfolk Island pine)).